A 160-amino-acid chain; its full sequence is Nucleotide-binding protein VSAL_I1728 (160 aa).

Belongs to the YajQ family.

Its function is as follows. Nucleotide-binding protein. This Aliivibrio salmonicida (strain LFI1238) (Vibrio salmonicida (strain LFI1238)) protein is Nucleotide-binding protein VSAL_I1728.